The sequence spans 168 residues: Alpha-N-acetylgalactosamine-specific lectin (168 aa).

The signal sequence occupies residues 1-18; sequence MAFFRALCFVLLVGFAAA. The region spanning 38–163 is the C-type lectin domain; sequence YNGNCYRYFG…CSRAFAYVCK (126 aa). Disulfide bonds link cysteine 59-cysteine 162 and cysteine 136-cysteine 154.

As to quaternary structure, monomer, homodimer and homooligomer.

Alpha-N-acetylgalactosamine-specific lectin. The oligomeric form has Ca(2+)-dependent hemagglutination activity towards sheep erythrocytes. Its hemagglutination activity is inhibited by various monosaccharides, oligosaccharides and glycopeptides, including inhibition by GalNAc, blood group A trisaccharide, Tn antigen, mucin and asialomucin. The protein is Alpha-N-acetylgalactosamine-specific lectin of Patiria pectinifera (Starfish).